The primary structure comprises 78 residues: MTEAQIKEKVYDIIVSKMGVNKDQIKPESKFSDDLGADSLDTVELIMELENEFDVQIPDEDAEKISTVQQAIDYIVKK.

A Carrier domain is found at 4 to 78 (AQIKEKVYDI…QQAIDYIVKK (75 aa)). S39 is subject to O-(pantetheine 4'-phosphoryl)serine.

The protein belongs to the acyl carrier protein (ACP) family. Post-translationally, 4'-phosphopantetheine is transferred from CoA to a specific serine of apo-ACP by AcpS. This modification is essential for activity because fatty acids are bound in thioester linkage to the sulfhydryl of the prosthetic group.

The protein localises to the cytoplasm. It participates in lipid metabolism; fatty acid biosynthesis. Functionally, carrier of the growing fatty acid chain in fatty acid biosynthesis. This Chlorobium phaeobacteroides (strain DSM 266 / SMG 266 / 2430) protein is Acyl carrier protein.